The sequence spans 36 residues: Asteropin-A (36 aa).

3 cysteine pairs are disulfide-bonded: Cys2-Cys18, Cys9-Cys25, and Cys17-Cys35.

Sialidase inhibitor. Competitively inhibits bacterial sialidases, but not viral sialidases. Does not inhibit glycosidases or proteases. Has no antitumor activity. In Asteropus simplex (Marine sponge), this protein is Asteropin-A.